Here is a 235-residue protein sequence, read N- to C-terminus: NAD(P)H-quinone oxidoreductase subunit K, chloroplastic (235 aa).

4 residues coordinate [4Fe-4S] cluster: C43, C44, C108, and C139.

Belongs to the complex I 20 kDa subunit family. As to quaternary structure, NDH is composed of at least 16 different subunits, 5 of which are encoded in the nucleus. Requires [4Fe-4S] cluster as cofactor.

Its subcellular location is the plastid. The protein localises to the chloroplast thylakoid membrane. The enzyme catalyses a plastoquinone + NADH + (n+1) H(+)(in) = a plastoquinol + NAD(+) + n H(+)(out). It carries out the reaction a plastoquinone + NADPH + (n+1) H(+)(in) = a plastoquinol + NADP(+) + n H(+)(out). Functionally, NDH shuttles electrons from NAD(P)H:plastoquinone, via FMN and iron-sulfur (Fe-S) centers, to quinones in the photosynthetic chain and possibly in a chloroplast respiratory chain. The immediate electron acceptor for the enzyme in this species is believed to be plastoquinone. Couples the redox reaction to proton translocation, and thus conserves the redox energy in a proton gradient. The sequence is that of NAD(P)H-quinone oxidoreductase subunit K, chloroplastic from Ipomoea purpurea (Common morning glory).